Reading from the N-terminus, the 316-residue chain is Secondary metabolism regulator laeA (316 aa).

The protein belongs to the methyltransferase superfamily. LaeA methyltransferase family. As to quaternary structure, component of the heterotrimeric velvet complex composed of laeA, ve1 and velB; Ve1 acting as a bridging protein between laeA and velB. Interacts directly with veA.

The protein localises to the nucleus. It is found in the cytoplasm. It carries out the reaction L-methionyl-[protein] + S-adenosyl-L-methionine = S-methyl-L-methionyl-[protein] + S-adenosyl-L-homocysteine. Functionally, methyltransferase that performs automethylation. No other methyl-accepting substrate has been identified yet. Component of the velvet transcription factor complex that acts as a global regulator for secondary metabolite gene expression. Controls the expression of the mycotoxins trichothecenes and zearalenon gene clusters. Negatively controls perithecial induction, but positively controls virulence toward the host plant. The chain is Secondary metabolism regulator laeA from Gibberella zeae (strain ATCC MYA-4620 / CBS 123657 / FGSC 9075 / NRRL 31084 / PH-1) (Wheat head blight fungus).